The sequence spans 387 residues: 1-deoxy-D-xylulose 5-phosphate reductoisomerase (387 aa).

T11, G12, S13, I14, G37, R38, Q39, and N127 together coordinate NADPH. Residue K128 participates in 1-deoxy-D-xylulose 5-phosphate binding. E129 serves as a coordination point for NADPH. D153 serves as a coordination point for Mn(2+). Residues S154, E155, S179, and H200 each contribute to the 1-deoxy-D-xylulose 5-phosphate site. Position 155 (E155) interacts with Mn(2+). NADPH is bound at residue G206. 1-deoxy-D-xylulose 5-phosphate is bound by residues S213, N218, K219, and E222. E222 contacts Mn(2+).

It belongs to the DXR family. Mg(2+) serves as cofactor. It depends on Mn(2+) as a cofactor.

The catalysed reaction is 2-C-methyl-D-erythritol 4-phosphate + NADP(+) = 1-deoxy-D-xylulose 5-phosphate + NADPH + H(+). Its pathway is isoprenoid biosynthesis; isopentenyl diphosphate biosynthesis via DXP pathway; isopentenyl diphosphate from 1-deoxy-D-xylulose 5-phosphate: step 1/6. In terms of biological role, catalyzes the NADPH-dependent rearrangement and reduction of 1-deoxy-D-xylulose-5-phosphate (DXP) to 2-C-methyl-D-erythritol 4-phosphate (MEP). The protein is 1-deoxy-D-xylulose 5-phosphate reductoisomerase of Symbiobacterium thermophilum (strain DSM 24528 / JCM 14929 / IAM 14863 / T).